Consider the following 117-residue polypeptide: Crustacean hyperglycemic hormones 3 (117 aa).

A signal peptide spans 1–24; sequence MVTPRMLSALSAVLLLVLTASSSA. Cystine bridges form between Cys-50–Cys-86, Cys-66–Cys-82, and Cys-69–Cys-95. A Valine amide modification is found at Val-115.

It belongs to the arthropod CHH/MIH/GIH/VIH hormone family. In terms of tissue distribution, produced by the medulla terminalis X-organ in the eyestalks and transported to the sinus gland where they are stored and released.

Its subcellular location is the secreted. Its function is as follows. Hormone found in the sinus gland of isopods and decapods which controls the blood sugar level. Has a secretagogue action over the amylase released from the midgut gland. May act as a stress hormone and may be involved in the control of molting and reproduction. This is Crustacean hyperglycemic hormones 3 from Penaeus japonicus (Kuruma prawn).